Here is a 692-residue protein sequence, read N- to C-terminus: Protein adenylyltransferase SelO-1, mitochondrial (692 aa).

A mitochondrion-targeting transit peptide spans 1–24; that stretch reads MASVGSRLTRFYISRPGVIARRFL. G142, G144, K176, D188, G189, R246, and R253 together coordinate ATP. Catalysis depends on D337, which acts as the Proton acceptor. Residues N338 and D347 each contribute to the Mg(2+) site. D347 is a binding site for ATP. The interval 637–676 is disordered; sequence LEQPGWMGRGGAAIPGERDETEEEGSNSSGAGARGLVPYD. A non-standard amino acid (selenocysteine) is located at residue U690.

The protein belongs to the SELO family. Mg(2+) is required as a cofactor.

Its subcellular location is the mitochondrion. The enzyme catalyses L-tyrosyl-[protein] + ATP = O-(5'-adenylyl)-L-tyrosyl-[protein] + diphosphate. It carries out the reaction L-threonyl-[protein] + ATP = 3-O-(5'-adenylyl)-L-threonyl-[protein] + diphosphate. The catalysed reaction is L-seryl-[protein] + ATP = 3-O-(5'-adenylyl)-L-seryl-[protein] + diphosphate. Catalyzes the transfer of adenosine 5'-monophosphate (AMP) to Ser, Thr and Tyr residues of target proteins (AMPylation). May be a redox-active mitochondrial selenoprotein which interacts with a redox target protein. The sequence is that of Protein adenylyltransferase SelO-1, mitochondrial from Danio rerio (Zebrafish).